The chain runs to 230 residues: MKIGIVGAMAQEVEILAGLMTDKTEHKIGSAVVFEGEVNGKSVVLLQSGIGKVAAAIGTTVLLQGFKPDVVINTGSAGGVAQGLKVGDIVISTETAYHDADVTAFGYAKGQLPACPATFKSDEKLTALAEKIAQKQGRRVKQGLICSGDSFIAGGERLAQIKADFPPVTAVEMEAAAIAHVCHAFGVPFVVVRAISDAGDGEAGMSFEEFLPIAAKQSCEMVLGMLAELE.

Residue E12 is the Proton acceptor of the active site. Residues G78, I152, and 173–174 contribute to the substrate site; that span reads ME. D197 serves as the catalytic Proton donor.

Belongs to the PNP/UDP phosphorylase family. MtnN subfamily.

The catalysed reaction is S-adenosyl-L-homocysteine + H2O = S-(5-deoxy-D-ribos-5-yl)-L-homocysteine + adenine. It catalyses the reaction S-methyl-5'-thioadenosine + H2O = 5-(methylsulfanyl)-D-ribose + adenine. It carries out the reaction 5'-deoxyadenosine + H2O = 5-deoxy-D-ribose + adenine. The protein operates within amino-acid biosynthesis; L-methionine biosynthesis via salvage pathway; S-methyl-5-thio-alpha-D-ribose 1-phosphate from S-methyl-5'-thioadenosine (hydrolase route): step 1/2. Catalyzes the irreversible cleavage of the glycosidic bond in both 5'-methylthioadenosine (MTA) and S-adenosylhomocysteine (SAH/AdoHcy) to adenine and the corresponding thioribose, 5'-methylthioribose and S-ribosylhomocysteine, respectively. Also cleaves 5'-deoxyadenosine, a toxic by-product of radical S-adenosylmethionine (SAM) enzymes, into 5-deoxyribose and adenine. The sequence is that of 5'-methylthioadenosine/S-adenosylhomocysteine nucleosidase from Actinobacillus succinogenes (strain ATCC 55618 / DSM 22257 / CCUG 43843 / 130Z).